Reading from the N-terminus, the 633-residue chain is ABC transporter G family member 1 (633 aa).

An ABC transporter domain is found at 23-265 (LTWEDLWVTA…FALSGFPCPT (243 aa)). 60–67 (GPSGSGKS) is a binding site for ATP. The region spanning 340-552 (TQSLVLTRRS…AYEGMFKNEF (213 aa)) is the ABC transmembrane type-2 domain. N352 carries N-linked (GlcNAc...) asparagine glycosylation. 6 consecutive transmembrane segments (helical) span residues 364–384 (LAVY…VGFS), 394–414 (MLMF…PSFV), 440–460 (LSAM…AYFM), 470–490 (FIYF…LMMI), 498–518 (FLMG…SGGF), and 580–600 (IDLV…LLVV).

Belongs to the ABC transporter superfamily. ABCG family. In terms of assembly, homodimer. Restricted to the petals, with the highest expression in the limb and, to a lesser extent, in petal tubes, probably in both epidermal and mesophyll cell layers.

It localises to the cell membrane. Functionally, ABC transporter controlling the release of volatile organic compounds (VOCs), including floral volatile benzenoids and phenylpropanoids (FVBP), in flowers of fragrant cultivars (e.g. cv. Mitchell and cv. V26). This scent, mostly produced in the evening and night by the petals, attracts the pollinators (e.g. the night-active hawkmoth pollinator Manduca sexta). In Petunia hybrida (Petunia), this protein is ABC transporter G family member 1.